Consider the following 137-residue polypeptide: Putative pre-16S rRNA nuclease (137 aa).

This sequence belongs to the YqgF nuclease family.

It is found in the cytoplasm. In terms of biological role, could be a nuclease involved in processing of the 5'-end of pre-16S rRNA. The polypeptide is Putative pre-16S rRNA nuclease (Bacillus cereus (strain G9842)).